We begin with the raw amino-acid sequence, 792 residues long: 5-methyltetrahydropteroyltriglutamate--homocysteine methyltransferase (792 aa).

5-methyltetrahydropteroyltri-L-glutamate is bound by residues Arg-16 to Lys-19 and Lys-112. L-homocysteine contacts are provided by residues Ile-432–Ser-434 and Glu-485. L-methionine is bound by residues Ile-432 to Ser-434 and Glu-485. 5-methyltetrahydropteroyltri-L-glutamate is bound by residues Arg-516–Cys-517 and Trp-562. L-homocysteine is bound at residue Asp-600. An L-methionine-binding site is contributed by Asp-600. Glu-606 provides a ligand contact to 5-methyltetrahydropteroyltri-L-glutamate. Zn(2+)-binding residues include His-642, Cys-644, and Glu-666. The active-site Proton donor is His-695. Cys-727 lines the Zn(2+) pocket.

This sequence belongs to the vitamin-B12 independent methionine synthase family. The cofactor is Zn(2+).

It catalyses the reaction 5-methyltetrahydropteroyltri-L-glutamate + L-homocysteine = tetrahydropteroyltri-L-glutamate + L-methionine. Its pathway is amino-acid biosynthesis; L-methionine biosynthesis via de novo pathway; L-methionine from L-homocysteine (MetE route): step 1/1. In terms of biological role, catalyzes the transfer of a methyl group from 5-methyltetrahydrofolate to homocysteine resulting in methionine formation. The sequence is that of 5-methyltetrahydropteroyltriglutamate--homocysteine methyltransferase from Cupriavidus necator (Alcaligenes eutrophus).